A 354-amino-acid chain; its full sequence is DNA polymerase IV (354 aa).

Residues 7-188 (IIHVDMDCFF…LPLAKIPGVG (182 aa)) enclose the UmuC domain. The Mg(2+) site is built by Asp-11 and Asp-106. Residue Glu-107 is part of the active site.

Belongs to the DNA polymerase type-Y family. In terms of assembly, monomer. Mg(2+) serves as cofactor.

It is found in the cytoplasm. The enzyme catalyses DNA(n) + a 2'-deoxyribonucleoside 5'-triphosphate = DNA(n+1) + diphosphate. In terms of biological role, poorly processive, error-prone DNA polymerase involved in untargeted mutagenesis. Copies undamaged DNA at stalled replication forks, which arise in vivo from mismatched or misaligned primer ends. These misaligned primers can be extended by PolIV. Exhibits no 3'-5' exonuclease (proofreading) activity. May be involved in translesional synthesis, in conjunction with the beta clamp from PolIII. The polypeptide is DNA polymerase IV (Shigella boydii serotype 18 (strain CDC 3083-94 / BS512)).